A 127-amino-acid chain; its full sequence is METSSRELQAAEYLEKHQIKEVVSYLTSALLFFRPEKPKEYLISLLERLRIAKVTGVAFPFFMDNSNIVAMFEMMDSSGRGTISFVQYKEALKTLGLCTEDEDLQDDGHKITLDKFKEEVNKRMKEI.

Residues 63-98 (MDNSNIVAMFEMMDSSGRGTISFVQYKEALKTLGLC) form the EF-hand domain.

This chain is EF-hand calcium-binding domain-containing protein 10 (EFCAB10), found in Homo sapiens (Human).